Here is a 188-residue protein sequence, read N- to C-terminus: UPF0340 protein SSU98_0310 (188 aa).

Belongs to the UPF0340 family.

This chain is UPF0340 protein SSU98_0310, found in Streptococcus suis (strain 98HAH33).